A 371-amino-acid chain; its full sequence is Rab9 effector protein with kelch motifs (371 aa).

Kelch repeat units follow at residues 47–93 (RVLL…FLSA), 98–144 (RLWV…TSSA), 149–201 (CLYV…AVGT), 202–251 (KLFI…VFKD), 252–301 (HLYI…VIPW), and 348–371 (LLLIFGGMDTQAEIYRDCIVSLIE).

Functionally, rab9 effector required for endosome to trans-Golgi network (TGN) transport. This chain is Rab9 effector protein with kelch motifs (RABEPK), found in Gallus gallus (Chicken).